Here is a 347-residue protein sequence, read N- to C-terminus: Glycerol-1-phosphate dehydrogenase [NAD(P)+] (347 aa).

Residues 90–94 (GRPVD) and 112–115 (TAIS) each bind NAD(+). Asp-117 is a binding site for substrate. Ser-121 lines the NAD(+) pocket. Asp-165 lines the substrate pocket. Zn(2+)-binding residues include Asp-165 and His-245. His-249 serves as a coordination point for substrate. His-262 is a binding site for Zn(2+).

The protein belongs to the glycerol-1-phosphate dehydrogenase family. In terms of assembly, homodimer. Requires Zn(2+) as cofactor.

It is found in the cytoplasm. The catalysed reaction is sn-glycerol 1-phosphate + NAD(+) = dihydroxyacetone phosphate + NADH + H(+). It catalyses the reaction sn-glycerol 1-phosphate + NADP(+) = dihydroxyacetone phosphate + NADPH + H(+). The protein operates within membrane lipid metabolism; glycerophospholipid metabolism. Catalyzes the NAD(P)H-dependent reduction of dihydroxyacetonephosphate (DHAP or glycerone phosphate) to glycerol 1-phosphate (G1P). The G1P thus generated is used as the glycerophosphate backbone of phospholipids in the cellular membranes of Archaea. The polypeptide is Glycerol-1-phosphate dehydrogenase [NAD(P)+] (Thermofilum pendens (strain DSM 2475 / Hrk 5)).